Reading from the N-terminus, the 124-residue chain is Fluoride-specific ion channel FluC (124 aa).

Transmembrane regions (helical) follow at residues 4–24, 35–55, 60–80, and 100–120; these read VLYI…ISIL, FGTL…YALA, IGPE…TTFS, and LNVL…QQLI. Gly74 and Thr77 together coordinate Na(+).

This sequence belongs to the fluoride channel Fluc/FEX (TC 1.A.43) family.

The protein localises to the cell inner membrane. It carries out the reaction fluoride(in) = fluoride(out). Na(+) is not transported, but it plays an essential structural role and its presence is essential for fluoride channel function. Functionally, fluoride-specific ion channel. Important for reducing fluoride concentration in the cell, thus reducing its toxicity. The chain is Fluoride-specific ion channel FluC from Shewanella amazonensis (strain ATCC BAA-1098 / SB2B).